A 954-amino-acid chain; its full sequence is Valine--tRNA ligase (954 aa).

The 'HIGH' region signature appears at 48–58 (PNVTGSLHMGH). Positions 560–564 (KMSKS) match the 'KMSKS' region motif. Lys563 serves as a coordination point for ATP. Residues 883–953 (AGFINKEAEL…LKQQYLAIEA (71 aa)) are a coiled coil.

Belongs to the class-I aminoacyl-tRNA synthetase family. ValS type 1 subfamily. In terms of assembly, monomer.

Its subcellular location is the cytoplasm. The catalysed reaction is tRNA(Val) + L-valine + ATP = L-valyl-tRNA(Val) + AMP + diphosphate. In terms of biological role, catalyzes the attachment of valine to tRNA(Val). As ValRS can inadvertently accommodate and process structurally similar amino acids such as threonine, to avoid such errors, it has a 'posttransfer' editing activity that hydrolyzes mischarged Thr-tRNA(Val) in a tRNA-dependent manner. The chain is Valine--tRNA ligase from Pasteurella multocida (strain Pm70).